Here is a 328-residue protein sequence, read N- to C-terminus: RING finger protein 175 (328 aa).

A run of 5 helical transmembrane segments spans residues M51–V71, L83–W103, R104–F121, A149–F169, and G180–I200. An RING-type; atypical zinc finger spans residues C227–K277.

The protein localises to the membrane. The sequence is that of RING finger protein 175 (RNF175) from Homo sapiens (Human).